A 400-amino-acid chain; its full sequence is Elongation factor Tu (400 aa).

The region spanning 10-209 (KPHVNIGTIG…NVDAYIPTPE (200 aa)) is the tr-type G domain. The G1 stretch occupies residues 19–26 (GHVDHGKT). 19 to 26 (GHVDHGKT) lines the GTP pocket. Thr26 provides a ligand contact to Mg(2+). The interval 60-64 (GITIN) is G2. The interval 81 to 84 (DCPG) is G3. Residues 81-85 (DCPGH) and 136-139 (NKSD) contribute to the GTP site. The interval 136-139 (NKSD) is G4. The G5 stretch occupies residues 174–176 (SGL).

Belongs to the TRAFAC class translation factor GTPase superfamily. Classic translation factor GTPase family. EF-Tu/EF-1A subfamily. In terms of assembly, monomer.

Its subcellular location is the cytoplasm. It carries out the reaction GTP + H2O = GDP + phosphate + H(+). Its function is as follows. GTP hydrolase that promotes the GTP-dependent binding of aminoacyl-tRNA to the A-site of ribosomes during protein biosynthesis. The polypeptide is Elongation factor Tu (Desulforamulus reducens (strain ATCC BAA-1160 / DSM 100696 / MI-1) (Desulfotomaculum reducens)).